Here is a 175-residue protein sequence, read N- to C-terminus: Rubredoxin-1 (175 aa).

Rubredoxin-like domains lie at 1–53 (MARY…FVLI) and 119–170 (FLKW…YVLY). 8 residues coordinate Fe cation: Cys6, Cys9, Cys39, Cys42, Cys124, Cys127, Cys157, and Cys160.

Belongs to the rubredoxin family. Fe(3+) serves as cofactor.

The protein localises to the cytoplasm. Its pathway is hydrocarbon metabolism; alkane degradation. Its function is as follows. Involved in the hydrocarbon hydroxylating system, which transfers electrons from NADH to rubredoxin reductase and then through rubredoxin to alkane 1 monooxygenase. This chain is Rubredoxin-1 (alkG), found in Pseudomonas putida (Arthrobacter siderocapsulatus).